The sequence spans 428 residues: Adenylosuccinate synthetase (428 aa).

Residues 12-18 and 40-42 each bind GTP; these read GDEGKGK and GHT. Asp13 acts as the Proton acceptor in catalysis. Positions 13 and 40 each coordinate Mg(2+). IMP is bound by residues 13 to 16, 38 to 41, Thr130, Arg144, Gln225, Thr240, and Arg304; these read DEGK and NAGH. The Proton donor role is filled by His41. 300–306 contributes to the substrate binding site; that stretch reads VTTGRAR. GTP-binding positions include Arg306, 332-334, and 414-416; these read KID and SVG.

This sequence belongs to the adenylosuccinate synthetase family. In terms of assembly, homodimer. The cofactor is Mg(2+).

Its subcellular location is the cytoplasm. The enzyme catalyses IMP + L-aspartate + GTP = N(6)-(1,2-dicarboxyethyl)-AMP + GDP + phosphate + 2 H(+). Its pathway is purine metabolism; AMP biosynthesis via de novo pathway; AMP from IMP: step 1/2. In terms of biological role, plays an important role in the de novo pathway of purine nucleotide biosynthesis. Catalyzes the first committed step in the biosynthesis of AMP from IMP. The sequence is that of Adenylosuccinate synthetase from Clostridium botulinum (strain ATCC 19397 / Type A).